A 292-amino-acid polypeptide reads, in one-letter code: Phosphatidylserine decarboxylase proenzyme (292 aa).

Active-site charge relay system; for autoendoproteolytic cleavage activity residues include Asp-92, His-149, and Ser-255. Catalysis depends on Ser-255, which acts as the Schiff-base intermediate with substrate; via pyruvic acid; for decarboxylase activity. At Ser-255 the chain carries Pyruvic acid (Ser); by autocatalysis.

The protein belongs to the phosphatidylserine decarboxylase family. PSD-B subfamily. Prokaryotic type I sub-subfamily. Heterodimer of a large membrane-associated beta subunit and a small pyruvoyl-containing alpha subunit. It depends on pyruvate as a cofactor. Is synthesized initially as an inactive proenzyme. Formation of the active enzyme involves a self-maturation process in which the active site pyruvoyl group is generated from an internal serine residue via an autocatalytic post-translational modification. Two non-identical subunits are generated from the proenzyme in this reaction, and the pyruvate is formed at the N-terminus of the alpha chain, which is derived from the carboxyl end of the proenzyme. The autoendoproteolytic cleavage occurs by a canonical serine protease mechanism, in which the side chain hydroxyl group of the serine supplies its oxygen atom to form the C-terminus of the beta chain, while the remainder of the serine residue undergoes an oxidative deamination to produce ammonia and the pyruvoyl prosthetic group on the alpha chain. During this reaction, the Ser that is part of the protease active site of the proenzyme becomes the pyruvoyl prosthetic group, which constitutes an essential element of the active site of the mature decarboxylase.

It is found in the cell membrane. It catalyses the reaction a 1,2-diacyl-sn-glycero-3-phospho-L-serine + H(+) = a 1,2-diacyl-sn-glycero-3-phosphoethanolamine + CO2. The protein operates within phospholipid metabolism; phosphatidylethanolamine biosynthesis; phosphatidylethanolamine from CDP-diacylglycerol: step 2/2. In terms of biological role, catalyzes the formation of phosphatidylethanolamine (PtdEtn) from phosphatidylserine (PtdSer). The protein is Phosphatidylserine decarboxylase proenzyme of Idiomarina loihiensis (strain ATCC BAA-735 / DSM 15497 / L2-TR).